The chain runs to 217 residues: Putative threonylcarbamoyl-AMP synthase (217 aa).

Residues 14 to 199 (SRGIVSAVGA…TPRVLRPGPV (186 aa)) enclose the YrdC-like domain.

It belongs to the SUA5 family.

It localises to the cytoplasm. The enzyme catalyses L-threonine + hydrogencarbonate + ATP = L-threonylcarbamoyladenylate + diphosphate + H2O. Its function is as follows. Required for the formation of a threonylcarbamoyl group on adenosine at position 37 (t(6)A37) in tRNAs that read codons beginning with adenine. Catalyzes the conversion of L-threonine, HCO(3)(-)/CO(2) and ATP to give threonylcarbamoyl-AMP (TC-AMP) as the acyladenylate intermediate, with the release of diphosphate. The chain is Putative threonylcarbamoyl-AMP synthase from Mycobacterium tuberculosis (strain CDC 1551 / Oshkosh).